A 316-amino-acid polypeptide reads, in one-letter code: Glutathione synthetase (316 aa).

Positions 125–310 constitute an ATP-grasp domain; sequence KLFTAWFSDL…ITGMLMDAIE (186 aa). An N-beta-linked (GlcNAc) arginine glycan is attached at arginine 256. Positions 281 and 283 each coordinate Mg(2+).

Belongs to the prokaryotic GSH synthase family. It depends on Mg(2+) as a cofactor. Mn(2+) serves as cofactor.

It carries out the reaction gamma-L-glutamyl-L-cysteine + glycine + ATP = glutathione + ADP + phosphate + H(+). It participates in sulfur metabolism; glutathione biosynthesis; glutathione from L-cysteine and L-glutamate: step 2/2. This is Glutathione synthetase from Escherichia coli O127:H6 (strain E2348/69 / EPEC).